The sequence spans 681 residues: MNHIDVTQRINELRTLIRRYDYHYYVLDDPIVSDAEYDALMNELRALEAAHPELITPDSPTQRVSGTPASQFAKVQHPQPMLSLGNAFTTTDLLAWRDRVLRLLGQDTAVAYVVEPKIDGLAVALTYHDGQFVQGATRGDGEVGEDVTANLRTISSIPLLLHPPDGGHDRDVPTALPSLIEVRGEVYMRTADFEALNDRLAAAGEKIFANPRNAAAGSLRQKDPAITAARPLRFFAYGVGPVEGVELTGQWQTLRYLRMLGFPVNQDVRRFTDFDEVLAYCEQWMARRDELTYEADGMVIKIDDFAQQRELGVVGRDPRWAIAFKFPPREAITRLLNITVNVGRTGVVTPNAELEPVQIGGVIVRNASLHNADYIAQRDIRIGDYVIVKRAGDVIPYVVGPVVARRDGSERPWQFPTHCPACGSPLEREPGEAAWRCNNFGICPAQLVRRLEHFASRAALDIVGLGERQAELFVQRGLVRDVADLFYLKAEDFAGLEGFGPKRIANLLNAIDAARQRPLDRLIVGLGIRYVGSVAAQALVNSLGSLDAIMNARQEELEQIPGIGPVVAASIVDFFAHPENRQLIEKLRAAGVQMNAGPQRERKSDVLAGQTFVLTGTLPSLTREQASALIIAHGGKVTDSVSKKTNYVVAGVNAGSKLAKAQQLGIPVLDEAALLALIGER.

Residues 34-38 (DAEYD), 83-84 (SL), and glutamate 115 each bind NAD(+). Lysine 117 acts as the N6-AMP-lysine intermediate in catalysis. Residues arginine 138, glutamate 185, lysine 301, and lysine 325 each coordinate NAD(+). Zn(2+) contacts are provided by cysteine 419, cysteine 422, cysteine 437, and cysteine 443. The 80-residue stretch at 602–681 (RKSDVLAGQT…AALLALIGER (80 aa)) folds into the BRCT domain.

The protein belongs to the NAD-dependent DNA ligase family. LigA subfamily. Requires Mg(2+) as cofactor. It depends on Mn(2+) as a cofactor.

It carries out the reaction NAD(+) + (deoxyribonucleotide)n-3'-hydroxyl + 5'-phospho-(deoxyribonucleotide)m = (deoxyribonucleotide)n+m + AMP + beta-nicotinamide D-nucleotide.. In terms of biological role, DNA ligase that catalyzes the formation of phosphodiester linkages between 5'-phosphoryl and 3'-hydroxyl groups in double-stranded DNA using NAD as a coenzyme and as the energy source for the reaction. It is essential for DNA replication and repair of damaged DNA. The polypeptide is DNA ligase (Chloroflexus aggregans (strain MD-66 / DSM 9485)).